The chain runs to 218 residues: Protein-L-isoaspartate O-methyltransferase (218 aa).

Residue serine 60 is part of the active site.

This sequence belongs to the methyltransferase superfamily. L-isoaspartyl/D-aspartyl protein methyltransferase family.

The protein resides in the cytoplasm. The enzyme catalyses [protein]-L-isoaspartate + S-adenosyl-L-methionine = [protein]-L-isoaspartate alpha-methyl ester + S-adenosyl-L-homocysteine. In terms of biological role, catalyzes the methyl esterification of L-isoaspartyl residues in peptides and proteins that result from spontaneous decomposition of normal L-aspartyl and L-asparaginyl residues. It plays a role in the repair and/or degradation of damaged proteins. This chain is Protein-L-isoaspartate O-methyltransferase, found in Roseiflexus castenholzii (strain DSM 13941 / HLO8).